Here is a 1677-residue protein sequence, read N- to C-terminus: MKLQIYNPNGEEFQYDFKSDIPFSFHIKNLYENLVVHNNGLKKILQSFPYCEANRSYDEIYSHYSLQEATSGNWMSNSTDSTFIKGSPDNTLFFKLKPLTHYLTPIEKLIGTTTSSSSSSSSPSSSSSSSSSSSSSSPSSPSLIGLILSLQTHLALLMYENIYGNKNNSKDTNNSGTINNNNNNNNNSGGSNIKLSSTPSSSFLTFPTSTSNLLLSSDVIKKILNIVFLAPSPQSLQLLVFLVSNSPSNDDLLSQISNTHSNSQLHGFSIGGGGGGSGNNSSITSIGGGDSKKIENKDNSGSAVVGSQSNSPQSSSFVKSQQIQQQQQYQKPNNSSPPPTTTTTTTTTTTTSGSQVKLSVGGNSGSFNNTTESSPSLFTLVDTAIKSVSTEHSSNFYLHILNNPAYNEVIETHFEMVCLILSLINNMYRLSPNPINYFNRLHNDSILKYIMEFAKKNQKIYQNTQYIVLRNYLMKELHMQRLHPINVDKVLSHQILLSDLWGSALSSYPFGGINSEHWLLLGFRSSNPMEDFKNTGVLALRNLSYFSKQHLQPFQSLLLTQTKREKDDNDNNNNKVIDKPIITNKFNIETLDDDNDNNNNQELNNNNNNNNNNNYNIKTKPRSNSRSYPLATVAISLTYTLSNIFRIGRINDSPIDSSIWDIAFSGSNWFDEIFVTTFNLFESLWHSEAHSYSDFPQVISHTREIIEKVCSKSPINLQDFKDKLTTLLEKKDEISSLDVNTVETLARYHQLQPSHINKRHIHKFFGERVNVDKLPNSNNPTDNIITTNTNTTTTTTTSTNNDCESTILQDHIESDKNNDDNNNNNEIIDDCESNSSFLVSSNTKEFSGKNLIKFFGEKTDQKEQYSTQPSNVKSYKLKNFFGDQPVVINKNGGGGGGGGGGGVDNELNQGGETVNKNKNDLIDDSDDENDNDEVNNNNNSNRINQDINHKLYGNSPISERNHRLHVFFGEWFDTEQVEYNEKIRSSSSTPDTSSPPLNSQPESARLHKLNKFFGERVNIPISKPKVIGEGGGGGIFPIDDIDVTDGSTNNHHIGGGGGGGSSDNLLSRSPEETRSDFKAQKVLGERLDIKKEKESINFASQPSNVREYKLHKLFGEMVPAHKQKSPKLQGGSGPWKKGNVSKSDSQAVVAPLNTIKFNNGNTNMNPLLQSCPTPINSPTSLSSDHLLDDVLDLNQTNNNIDNENDDINEAIIPPSLSPTLLGVNNHGEEEEEEEEEEEGYNHTQDNHAQDNHAQDNLLLLDDDDDTKSEPIPSTNTLLDSDIIPNNTTTTTTTTTTTTTTTTNTTGQKRISILSTDTNRPGSSNYGESSLSNGSRFDGIPESTTHNANGDDDHQINLHSSSPQPLPKFVNTDDEDNNNNNNNKKQDDDEDDEDDDDKEEIRKKRENKTNHRLHVFFGERFDVENIHFFTRVSSSPGSYDAHLNNPHLSVSPQPETVRSYKLKKFFGKNPEDNVTLSSSYDSSTSPLLSQLNHHHHHNHHQSASNLINNINNNNNNNNNNNSNNNSNNQNNLNSSNNSNNSSISNNSGKNNTNNNNNNNTNNNNDNSPSTSPSSSFKKHQYQYVSAEDPEGDVSKTNEIRKLRRDFKTQRILGERLNIKKESTVVAFQDQPSTIKVDKLISLFGEKVGFSLKRKESQRDLQHQASSSNLKFSLASSSK.

14 disordered regions span residues 112-139, 168-194, 264-372, 592-625, 775-801, 888-947, 982-1002, 1047-1075, 1122-1141, 1197-1248, 1261-1404, 1434-1454, 1467-1593, and 1654-1677; these read TTTSSSSSSSSPSSSSSSSSSSSSSSPS, NSKDTNNSGTINNNNNNNNNSGGSNIK, QLHG…NTTE, DDDNDNNNNQELNNNNNNNNNNNYNIKTKPRSNS, PNSNNPTDNIITTNTNTTTTTTTSTNN, INKN…NQDI, KIRSSSSTPDTSSPPLNSQPE, STNNHHIGGGGGGGSSDNLLSRSPEETRS, KQKSPKLQGGSGPWKKGNVS, NNNI…DNHA, DDDD…RKKR, SPGSYDAHLNNPHLSVSPQPE, KNPE…GDVS, and ESQRDLQHQASSSNLKFSLASSSK. Low complexity-rich tracts occupy residues 115-139 and 172-194; these read SSSSSSSSPSSSSSSSSSSSSSSPS and TNNSGTINNNNNNNNNSGGSNIK. Gly residues predominate over residues 269-278; the sequence is SIGGGGGGSG. 3 stretches are compositionally biased toward low complexity: residues 307 to 334, 341 to 352, and 597 to 616; these read SQSNSPQSSSFVKSQQIQQQQQYQKPNN, TTTTTTTTTTTS, and NNNNQELNNNNNNNNNNNYN. Residues 492-710 form the ELMO domain; that stretch reads SHQILLSDLW…HTREIIEKVC (219 aa). Residues 891–903 are compositionally biased toward gly residues; it reads NGGGGGGGGGGGV. The span at 922–933 shows a compositional bias: acidic residues; it reads IDDSDDENDNDE. Low complexity-rich tracts occupy residues 934-946 and 985-996; these read VNNNNNSNRINQD and SSSSTPDTSSPP. Positions 1186–1212 form a coiled coil; sequence LLDDVLDLNQTNNNIDNENDDINEAII. Positions 1228–1238 are enriched in acidic residues; that stretch reads EEEEEEEEEEE. Positions 1285 to 1305 are enriched in low complexity; sequence NNTTTTTTTTTTTTTTTTNTT. Residues 1306–1334 are compositionally biased toward polar residues; that stretch reads GQKRISILSTDTNRPGSSNYGESSLSNGS. Acidic residues predominate over residues 1387–1397; sequence DDEDDEDDDDK. Residues 1445–1454 are compositionally biased toward polar residues; sequence PHLSVSPQPE. Composition is skewed to low complexity over residues 1475–1488, 1503–1574, and 1663–1677; these read LSSSYDSSTSPLLS, SNLI…PSSS, and ASSSNLKFSLASSSK.

The sequence is that of ELMO domain-containing protein E (elmoE) from Dictyostelium discoideum (Social amoeba).